The sequence spans 339 residues: Glycerol-3-phosphate dehydrogenase [NAD(P)+] (339 aa).

NADPH contacts are provided by serine 14, tyrosine 15, histidine 35, and lysine 109. 3 residues coordinate sn-glycerol 3-phosphate: lysine 109, glycine 138, and threonine 140. Residue alanine 142 coordinates NADPH. 5 residues coordinate sn-glycerol 3-phosphate: lysine 194, aspartate 247, serine 257, arginine 258, and asparagine 259. Lysine 194 functions as the Proton acceptor in the catalytic mechanism. Residue arginine 258 coordinates NADPH. Valine 282 and glutamate 284 together coordinate NADPH.

This sequence belongs to the NAD-dependent glycerol-3-phosphate dehydrogenase family.

It localises to the cytoplasm. It carries out the reaction sn-glycerol 3-phosphate + NAD(+) = dihydroxyacetone phosphate + NADH + H(+). The enzyme catalyses sn-glycerol 3-phosphate + NADP(+) = dihydroxyacetone phosphate + NADPH + H(+). It functions in the pathway membrane lipid metabolism; glycerophospholipid metabolism. In terms of biological role, catalyzes the reduction of the glycolytic intermediate dihydroxyacetone phosphate (DHAP) to sn-glycerol 3-phosphate (G3P), the key precursor for phospholipid synthesis. This is Glycerol-3-phosphate dehydrogenase [NAD(P)+] from Shewanella halifaxensis (strain HAW-EB4).